The sequence spans 220 residues: NADH-quinone oxidoreductase subunit I (220 aa).

4Fe-4S ferredoxin-type domains follow at residues 71 to 102 and 112 to 141; these read LQRLLDSGSERCIGCGLCEKICTSNCIRIITH and DSYTINLGRCIYCGLCAEVCPELAIVMGNR. The [4Fe-4S] cluster site is built by cysteine 82, cysteine 85, cysteine 88, cysteine 92, cysteine 121, cysteine 124, cysteine 127, and cysteine 131. Positions 187 to 220 are disordered; that stretch reads MQATPLDYVQEPSKEESKEETPTNPESNKGDENV. Positions 198–207 are enriched in basic and acidic residues; the sequence is PSKEESKEET.

The protein belongs to the complex I 23 kDa subunit family. As to quaternary structure, NDH-1 is composed of 14 different subunits. Subunits NuoA, H, J, K, L, M, N constitute the membrane sector of the complex. It depends on [4Fe-4S] cluster as a cofactor.

The protein resides in the cell inner membrane. The enzyme catalyses a quinone + NADH + 5 H(+)(in) = a quinol + NAD(+) + 4 H(+)(out). In terms of biological role, NDH-1 shuttles electrons from NADH, via FMN and iron-sulfur (Fe-S) centers, to quinones in the respiratory chain. The immediate electron acceptor for the enzyme in this species is believed to be ubiquinone. Couples the redox reaction to proton translocation (for every two electrons transferred, four hydrogen ions are translocated across the cytoplasmic membrane), and thus conserves the redox energy in a proton gradient. This Helicobacter pylori (strain HPAG1) protein is NADH-quinone oxidoreductase subunit I.